Consider the following 732-residue polypeptide: Bromodomain-containing factor 1 (732 aa).

Residues 1–22 show a composition bias toward polar residues; it reads MSETFPETNTPVQTPSTESFVN. Disordered stretches follow at residues 1 to 207, 324 to 380, 491 to 517, 556 to 600, and 700 to 732; these read MSET…NLPE, TNVA…ETKP, NKPV…EDNV, REQQ…TPPQ, and VNGQ…SEEE. Residues 37–51 show a composition bias toward low complexity; the sequence is SQDSDSNQQSSHQEP. Positions 89-100 are enriched in polar residues; it reads ASQTGVIQTEVS. Acidic residues predominate over residues 137-147; the sequence is EAPEENPQEEV. Positions 206–315 constitute a Bromo 1 domain; sequence PENPIPQHQA…AQFEKLMVKV (110 aa). The span at 327–338 shows a compositional bias: polar residues; it reads AEATSVATSPTT. The span at 370-380 shows a compositional bias: basic and acidic residues; it reads KSKELPYETKP. The Bromo 2 domain maps to 383-492; that stretch reads KKVAAELRFC…AVFDKKWANK (110 aa). A coiled-coil region spans residues 529 to 569; that stretch reads AIQVMENQIIRMRKELDELKKEHLKKLREQQAARKKKKQQK. Residues 561–579 are compositionally biased toward basic residues; sequence ARKKKKQQKGKRRAPKAKH. Over residues 590-600 the composition is skewed to pro residues; that stretch reads PPEPPKLTPPQ. The NET domain occupies 593 to 672; that stretch reads PPKLTPPQPV…GDKALKNSAG (80 aa). Residues 718–732 show a composition bias toward acidic residues; that stretch reads ESSEDEASSESSEEE.

The protein belongs to the BET family.

It is found in the nucleus. Functionally, transcription factor involved in the expression of a broad class of genes including snRNAs. Required for sporulation and DNA-damage repair. Prevents the spreading of SIR silencing at telomeres and protects histone H4, but not H3, from deacetylation. The protein is Bromodomain-containing factor 1 (BDF1) of Candida albicans (strain SC5314 / ATCC MYA-2876) (Yeast).